A 622-amino-acid polypeptide reads, in one-letter code: Coiled-coil domain-containing protein 17 (622 aa).

3 coiled-coil regions span residues 81–102, 146–207, and 294–320; these read RSAL…QEMR, ARRV…LEVL, and GELP…RGRA. Disordered stretches follow at residues 334–356 and 584–622; these read SLQP…PLPP and PAVG…PVSF. Over residues 344–356 the composition is skewed to pro residues; it reads PLLPPPVAPPLPP. Residues 593–615 show a composition bias toward basic and acidic residues; that stretch reads PRTEEPLSGVKDRDEGLGPHHSS.

The polypeptide is Coiled-coil domain-containing protein 17 (CCDC17) (Homo sapiens (Human)).